Consider the following 578-residue polypeptide: MLLRISVLFLLLGSCGALFGKRQKCEQITIPLCKGIGYNMTSFPNSYGHEKQEEAGLEVHQFYPLVEVGCFQHLKFFLCTMYTPICQENYDKPILPCMELCVEARSKCSPIMAKYGFRWPETLSCEALPKMSDQMSTGNICAAPPDTPKKQHKGHHHKNQNQNQNQNHNYSPDGPEVGISKIDNEVIAGPSECQCTCNQPFQFVASEKSKVGNVTNCAYSCHSPALAESHSLVSNWMAFWSITCCVLASFTFLTFLIETDRFQYPERPIFMLAFCQLMVAVGFMIRYFVGHEEIACDSMRIKGADDNSGSLCFVVFLLTYFFGMAASVWWVILSLTWVLSAASKWSPEAISSFSFHFHVVGWCLPAIQTVLVIVFNAIDGDPITGICYVGNTDLQFQRIFVLFPLLVYFIVGVLFLVIGFCNLWSIRNEVQKQHPSLESAHKITQLMSKIGIFSLLYTIPSLLIICVLFYEQNHRSLWEQSQLCSCSPKQTIGDSSLIISLIKTCCMCILGWTSGFWVCSTKTLSSWKNAICCLGSSRSLPKYQPADILYAKSDMSSSQFYNTSLRHNHLYGGIPDKL.

The signal sequence occupies residues 1 to 17 (MLLRISVLFLLLGSCGA). Topologically, residues 18–236 (LFGKRQKCEQ…AESHSLVSNW (219 aa)) are extracellular. The 125-residue stretch at 20 to 144 (GKRQKCEQIT…MSTGNICAAP (125 aa)) folds into the FZ domain. 5 disulfides stabilise this stretch: Cys-25-Cys-86, Cys-33-Cys-79, Cys-70-Cys-108, Cys-97-Cys-141, and Cys-101-Cys-125. Residue Asn-39 is glycosylated (N-linked (GlcNAc...) asparagine). A disordered region spans residues 138–175 (GNICAAPPDTPKKQHKGHHHKNQNQNQNQNHNYSPDGP). Positions 150 to 159 (KQHKGHHHKN) are enriched in basic residues. Residues 160–169 (QNQNQNQNHN) are compositionally biased toward low complexity. Asn-213 carries N-linked (GlcNAc...) asparagine glycosylation. The chain crosses the membrane as a helical span at residues 237-257 (MAFWSITCCVLASFTFLTFLI). Residues 258–268 (ETDRFQYPERP) lie on the Cytoplasmic side of the membrane. The helical transmembrane segment at 269-289 (IFMLAFCQLMVAVGFMIRYFV) threads the bilayer. Residues 290 to 312 (GHEEIACDSMRIKGADDNSGSLC) are Extracellular-facing. Residues 313–333 (FVVFLLTYFFGMAASVWWVIL) form a helical membrane-spanning segment. Topologically, residues 334–354 (SLTWVLSAASKWSPEAISSFS) are cytoplasmic. Residues 355–375 (FHFHVVGWCLPAIQTVLVIVF) traverse the membrane as a helical segment. Residues 376-398 (NAIDGDPITGICYVGNTDLQFQR) are Extracellular-facing. The chain crosses the membrane as a helical span at residues 399 to 419 (IFVLFPLLVYFIVGVLFLVIG). Topologically, residues 420 to 449 (FCNLWSIRNEVQKQHPSLESAHKITQLMSK) are cytoplasmic. Residues 450–470 (IGIFSLLYTIPSLLIICVLFY) form a helical membrane-spanning segment. Over 471-497 (EQNHRSLWEQSQLCSCSPKQTIGDSSL) the chain is Extracellular. A helical membrane pass occupies residues 498-518 (IISLIKTCCMCILGWTSGFWV). Topologically, residues 519–578 (CSTKTLSSWKNAICCLGSSRSLPKYQPADILYAKSDMSSSQFYNTSLRHNHLYGGIPDKL) are cytoplasmic. A Lys-Thr-X-X-X-Trp motif, mediates interaction with the PDZ domain of Dvl family members motif is present at residues 522-527 (KTLSSW). The short motif at 556 to 558 (SSS) is the PDZ-binding element.

It belongs to the G-protein coupled receptor Fz/Smo family. Expressed in two pairs of head neurons and throughout the pharynx.

It is found in the cell membrane. Functionally, receptor for Wnt proteins. Most frizzled receptors are coupled to the beta-catenin canonical signaling pathway, which leads to the activation of disheveled proteins, inhibition of gsk-3 kinase, nuclear accumulation of beta-catenin and activation of Wnt target genes. A second signaling pathway involving PKC and calcium fluxes has been seen for some family members, but it is not yet clear if it represents a distinct pathway or if it can be integrated in the canonical pathway, as PKC seems to be required for Wnt-mediated inactivation of gsk-3 kinase. Both pathways seem to involve interactions with G-proteins. Required for the migration and axon formation and guidance of different neuronal cell types including canal-associated neurons (CAN), hermaphrodite-specific neurons (HSN), anterior lateral microtubule neurons (ALM), and the right Q neuroblast (QR) and its descendants. Directs ALM migration through frizzled protein mom-5 and Wnt ligands cwn-1, cwn-2 and egl-20. May act redundantly with mom-5 to direct CAN migration. Plays a role in the organization of head ganglion cells. Probably by acting as a receptor for Wnt ligand cwn-2, plays a role in the positioning of the nerve ring and may in addition positively regulate the neurite outgrowth of RME GABAergic motor neurons along the anterior-posterior axis of the body. This is Frizzled-2 from Caenorhabditis elegans.